A 2344-amino-acid chain; its full sequence is MGSQTLQILRQGVWAALSGGWYYDPHQATFVNALHLYLWLFLLGLPFTLYMALPSSMIIVAVYCPVVAAVFIILKMVNYRLHRALDAGEIVDRSAKEFTDQRAKAEQGNCSTRRKDSNGPSDPGGGIEMSEFIREATPPVGCSSRNSYAGLDPSNQIGSGSSRLGTAATIKGDTDTAKTSDDISLSLGQSSSLCKEGSEEQDLATDRKLFRLVSNDSFISIQPSLSSCGQDLPRDFSDKVSLPSHSQHHRVDQSLCSACDTEVASLVPLHSHSYRKEHRPRGVPRTSSSAVAFPDASLSGLPLYQQQQRRGLDPVTELDSSKPHSGTRESSAGKSCPPAQSQPAADRRKSSSQPPTKCGKSRALNAEKSVDSLRSLSTRSSGSTESYCSGTDRDTNSTLSSYKSEQTSSTHIESILSEHEESPKVGDKSARKRECGADSVEERSHRADDRRTSSDKTAPEGNTPAGPPEAPDAQASEEMADQAAPSSSASEDANKNPHANEFTVPGDRPPEQSAESKEEQSEKPSLATDSRVCKDDGGKQKEGDVRPKSSSLIHRTTSAHKPGRRRTGKKRASSFDSSRHRDYVSFRGVSGTKPHSAVFGHDEDSSDQSDLSRAPSIHSAHQFSSDSSSSATSHSCQSPEGKYGALKTKHGHRDRGTDSDHTHRAHPGPEGTTKKRASRRTSSTSSAKTRARVLSLDSGTVACLNDSNRLLAPDSMKPLTTSKSDLEAKEGEVLDELSLLGRASQLETVTRSRNSLPSQVAFPEGEEQDAATGAAQASEEAVAFRRERSTFRRQAVRRRHNAGSNPTPPTLLIGSPLSLQDGQQGQQSTAQVKVQSRPPSQAAVLSASASLLVRKGSVHLEASHDHASAVGGSSLHDELGKFSSTLYETGGCDMSLVNFEPAARRASNICDTDSHVSSSTSVRFYPHDMLSLPQIRLNRLLTIDTDLLEQQDIDLSPDLAATYGPTEEAAQKVKHYYRFWVLPQLWIGINFDRLTLLALFDRNREILENILAVVLAILVAFLGSILLIQGFFRDIWVFQFCLVIASCQYSLLKSVQPDSSSPRHGHNRIIAYSRPVYFCLCCGLIWLLDYGSRNLTTSKFKLYGVTFTNPLVLLSARDLVIVFTLCFPIVFFIGLLPQVNTFVMYLCEQLDIHIFGGNATTSLLAALYSFLCSIVAVALLYGLCYGALRDSWDGQHVPVLFSVFCGLLVAVSYHLSRQSSDPSVLFSLMQSKIFPKADEKNPEDPLSEVKDPLPEKLSNSVSERLQSDLVVCVIIGVLYFAIHVSTVFTALQPALKYVLYALVGVVGLVTHYVLPQVRKQLPWHCFSRPLLRTAEHSQYEVRNAATMMWFEKLHVWLLFVEKNIIYPLIVLNELSSSAETIASPKKLDTELGALMITIAGLKLLRSSFSSPTYQYITVIFTVLFFKFDYEAFSETMLLDLFFMSILFSKLWELLYKLQFVYTYVAPWQITWGSAFHAFAQPFAVPHSAMLFVQAIVSAFFSTPLNPFLGSAIFITSYVRPVKFWERDYNTKRVDHSNTRLASQLDRNPGSDDNNLNSIFYEHLTRSLQHSLCGDLLLGRWGNYSTGDCFILASDYLNALVHLIEIGNGLVTFQLRGLEFRGTYCQQREVEAITEGVEEDEGFCCCEPGHVPHVLSFNAAFGQRWLAWEVVVTKYILEGYSITDNSAASMLQVFDLRRVLTTYYVKGIIYYVTTSSKLEEWLANETMQEGLRLCADRNYVDVDPTFNPNIDEDYDHRLAGISRESFCVIYLSWIEYCSSRRAKPLDVDKDSSLVTLCYGLCVLGRRALGTASHHMSSNLESFLYGLHALFKGDFRISSVRDEWIFADMELLRKVVVPGIRMSIKLHQDHFTSPDEYDDPTVLYEAIVSHEKNLVIAHEGDPAWRSAVLANSPSLLALRHVMDDGTNEYKIIMLNRRYLSFRVIKVNKECVRGLWAGQQQELVFLRNRNPERGSIQNAKQALRNMINSSCDQPIGYPIFVSPLTTSYSDSHDQLKEILGGPISLGNIRNFIVSTWHRLRKGCGAGCNSGGNIEDSDTGGGTSCPGNSAVTASDPHNNVSQGSTGHPGQGAGSGLHPPTTSYPPTLGTSHSAHSVQSSLVRQSPARASMASQSSYCYSSRHSSLRMSTTGFVPCRRSSTSQISLRNLPSSIQSRLSMVNQMEAASQGGMGCVQHGLPSSSSSSQSIPACKHHTLVAFLGAEGGQGSATEAQPGNTSSPANISHARKGEVIYRVQIVDLSQILEGINVSKRKELHWPDEGIRLKAGRNSWKDWSPQEGMEGHVVHRWVPCSRDPSTRSHIDKTVLLVQIDDKYVTIIETGVLELGAEV.

2 helical membrane passes run 33–53 (ALHL…YMAL) and 57–77 (MIIV…LKMV). Disordered regions lie at residues 101–163 (QRAK…GSSR), 271–290 (SHSY…SSSA), 306–692 (QQQR…TRAR), and 749–837 (VTRS…VQSR). Polar residues predominate over residues 143–163 (SSRNSYAGLDPSNQIGSGSSR). A compositionally biased stretch (basic residues) spans 272-282 (HSYRKEHRPRG). Positions 328-343 (RESSAGKSCPPAQSQP) are enriched in polar residues. The span at 372 to 390 (SLRSLSTRSSGSTESYCSG) shows a compositional bias: low complexity. The segment covering 396–406 (NSTLSSYKSEQ) has biased composition (polar residues). 3 stretches are compositionally biased toward basic and acidic residues: residues 416-458 (LSEH…DKTA), 508-522 (RPPE…EQSE), and 531-547 (RVCK…DVRP). Residues 557-572 (TSAHKPGRRRTGKKRA) show a composition bias toward basic residues. Low complexity predominate over residues 616–638 (SIHSAHQFSSDSSSSATSHSCQS). Positions 749 to 758 (VTRSRNSLPS) are enriched in polar residues. Low complexity-rich tracts occupy residues 770–781 (AATGAAQASEEA) and 817–835 (LSLQ…VKVQ). The next 3 helical transmembrane spans lie at 1010–1030 (ILAV…LIQG), 1035–1055 (IWVF…LKSV), and 1069–1089 (IIAY…WLLD). Asparagine 1094 carries an N-linked (GlcNAc...) asparagine glycan. The helical transmembrane segment at 1119-1139 (LVIVFTLCFPIVFFIGLLPQV) threads the bilayer. A glycan (N-linked (GlcNAc...) asparagine) is linked at asparagine 1158. 4 helical membrane passes run 1163–1183 (LLAA…LYGL), 1196–1216 (HVPV…YHLS), 1269–1289 (LVVC…TVFT), and 1297–1317 (YVLY…LPQV). N-linked (GlcNAc...) asparagine glycans are attached at residues asparagine 1582, asparagine 1723, asparagine 1985, and asparagine 2075. The segment at 2051–2123 (EDSDTGGGTS…SSLVRQSPAR (73 aa)) is disordered. Composition is skewed to polar residues over residues 2061 to 2081 (CPGN…QGST) and 2095 to 2118 (PTTS…SLVR). N-linked (GlcNAc...) asparagine glycans are attached at residues asparagine 2231, asparagine 2237, and asparagine 2263.

This sequence belongs to the pecanex family.

Its subcellular location is the membrane. The sequence is that of Pecanex-like protein 1 from Mus musculus (Mouse).